Reading from the N-terminus, the 540-residue chain is Chaperonin GroEL 4 (540 aa).

Residues 29–32, 86–90, G413, 477–479, and D493 each bind ATP; these read TLGP, DGTTT, and NAA.

The protein belongs to the chaperonin (HSP60) family. Forms a cylinder of 14 subunits composed of two heptameric rings stacked back-to-back. Interacts with the co-chaperonin GroES.

It localises to the cytoplasm. The catalysed reaction is ATP + H2O + a folded polypeptide = ADP + phosphate + an unfolded polypeptide.. In terms of biological role, together with its co-chaperonin GroES, plays an essential role in assisting protein folding. The GroEL-GroES system forms a nano-cage that allows encapsulation of the non-native substrate proteins and provides a physical environment optimized to promote and accelerate protein folding. This Frankia alni (strain DSM 45986 / CECT 9034 / ACN14a) protein is Chaperonin GroEL 4.